A 316-amino-acid polypeptide reads, in one-letter code: D-alanine--D-alanine ligase (316 aa).

The ATP-grasp domain occupies 104–303 (KRVWLQHGLP…YADLCVAILA (200 aa)). Residue 130-185 (PDRLGLPLILKPPHEGSTVGITKVAGYSDMKAAYELAARFDAEVLAEQFITGRELT) participates in ATP binding. D257, E270, and N272 together coordinate Mg(2+).

The protein belongs to the D-alanine--D-alanine ligase family. It depends on Mg(2+) as a cofactor. The cofactor is Mn(2+).

The protein resides in the cytoplasm. The catalysed reaction is 2 D-alanine + ATP = D-alanyl-D-alanine + ADP + phosphate + H(+). The protein operates within cell wall biogenesis; peptidoglycan biosynthesis. Its function is as follows. Cell wall formation. The polypeptide is D-alanine--D-alanine ligase (Bordetella bronchiseptica (strain ATCC BAA-588 / NCTC 13252 / RB50) (Alcaligenes bronchisepticus)).